We begin with the raw amino-acid sequence, 923 residues long: Protocadherin gamma-B5 (923 aa).

The first 30 residues, 1 to 30, serve as a signal peptide directing secretion; that stretch reads MGRGTGELGRAERLPVLFLFLLSLFCPALC. 6 Cadherin domains span residues 31-133, 134-242, 243-343, 344-448, 449-558, and 566-671; these read EQIR…TPKF, TQNS…PPVF, NRDV…SPEV, TFHS…APVF, HQAS…APRV, and DGSA…LPDI. The Extracellular portion of the chain corresponds to 31–687; it reads EQIRYRIPEE…SDPQAELQFY (657 aa). Asn415 and Asn541 each carry an N-linked (GlcNAc...) asparagine glycan. The chain crosses the membrane as a helical span at residues 688-708; it reads LVVALALISVLFLLAVILAIA. Residues 709-923 lie on the Cytoplasmic side of the membrane; the sequence is LRLRRSSSPA…KKKSGKKEKK (215 aa). Disordered regions lie at residues 794 to 832 and 893 to 923; these read TSHP…WPNN and ATLT…KEKK. A compositionally biased stretch (polar residues) spans 807–832; the sequence is WRFSQAQRPGTSGSQNGDDTGTWPNN. Residues 913–923 are compositionally biased toward basic residues; that stretch reads NKKKSGKKEKK.

It localises to the cell membrane. In terms of biological role, potential calcium-dependent cell-adhesion protein. May be involved in the establishment and maintenance of specific neuronal connections in the brain. The protein is Protocadherin gamma-B5 (PCDHGB5) of Pan troglodytes (Chimpanzee).